The sequence spans 200 residues: Eukaryotic translation initiation factor isoform 4E (200 aa).

MRNA is bound by residues 44–49, K76, and 94–95; these read QGVAWG and WE. The cysteines at positions 99 and 138 are disulfide-linked. Residues 145 to 150 and 189 to 192 each bind mRNA; these read RRSQDK and KRER.

This sequence belongs to the eukaryotic initiation factor 4E family. As to quaternary structure, EIF4F is a multi-subunit complex, the composition of which varies with external and internal environmental conditions. It is composed of at least EIF4A, EIF4E and EIF4G. EIF4E is also known to interact with other partners. In higher plants two isoforms of EIF4F have been identified, named isoform EIF4F and isoform EIF(iso)4F. Isoform EIF4F has subunits p220 and p26, whereas isoform EIF(iso)4F has subunits p82 and p28. (Microbial infection) Interacts with viral genome-linked protein (VPg); this interaction is possible in susceptible hosts but impaired in resistant plants. In terms of processing, according to the redox status, the Cys-99-Cys-138 disulfide bridge may have a role in regulating protein function by affecting its ability to bind capped mRNA. In terms of tissue distribution, mostly expressed in roots and leaves, and, to a lower extent, in stems, flowers and immature green fruits.

It is found in the cytoplasm. Its subcellular location is the nucleus. Its function is as follows. Component of the protein complex eIF4F, which is involved in the recognition of the mRNA cap, ATP-dependent unwinding of 5'-terminal secondary structure and recruitment of mRNA to the ribosome. Recognizes and binds the 7-methylguanosine-containing mRNA cap during an early step in the initiation of protein synthesis and facilitates ribosome binding by inducing the unwinding of the mRNAs secondary structures. Key component of recessive resistance to potyviruses. In terms of biological role, (Microbial infection) Susceptibility host factor required for viral infection by recruiting viral RNAs to the host ribosomal complex via an interaction with viral genome-linked protein (VPg). This chain is Eukaryotic translation initiation factor isoform 4E, found in Solanum lycopersicum (Tomato).